A 537-amino-acid polypeptide reads, in one-letter code: Putative cysteine ligase BshC (537 aa).

Residues 422-450 (IEKVEGMIEQQRRLNKDLLDEVAGNQNNI) are a coiled coil.

The protein belongs to the BshC family.

In terms of biological role, involved in bacillithiol (BSH) biosynthesis. May catalyze the last step of the pathway, the addition of cysteine to glucosamine malate (GlcN-Mal) to generate BSH. The sequence is that of Putative cysteine ligase BshC from Staphylococcus aureus (strain Mu3 / ATCC 700698).